Consider the following 356-residue polypeptide: UDP-N-acetylglucosamine--N-acetylmuramyl-(pentapeptide) pyrophosphoryl-undecaprenol N-acetylglucosamine transferase (356 aa).

Residues 10-12 (TAG), Asn123, Arg159, Ser193, Ile240, and Gln284 contribute to the UDP-N-acetyl-alpha-D-glucosamine site.

The protein belongs to the glycosyltransferase 28 family. MurG subfamily.

The protein resides in the cell membrane. It catalyses the reaction di-trans,octa-cis-undecaprenyl diphospho-N-acetyl-alpha-D-muramoyl-L-alanyl-D-glutamyl-meso-2,6-diaminopimeloyl-D-alanyl-D-alanine + UDP-N-acetyl-alpha-D-glucosamine = di-trans,octa-cis-undecaprenyl diphospho-[N-acetyl-alpha-D-glucosaminyl-(1-&gt;4)]-N-acetyl-alpha-D-muramoyl-L-alanyl-D-glutamyl-meso-2,6-diaminopimeloyl-D-alanyl-D-alanine + UDP + H(+). The protein operates within cell wall biogenesis; peptidoglycan biosynthesis. Its function is as follows. Cell wall formation. Catalyzes the transfer of a GlcNAc subunit on undecaprenyl-pyrophosphoryl-MurNAc-pentapeptide (lipid intermediate I) to form undecaprenyl-pyrophosphoryl-MurNAc-(pentapeptide)GlcNAc (lipid intermediate II). The protein is UDP-N-acetylglucosamine--N-acetylmuramyl-(pentapeptide) pyrophosphoryl-undecaprenol N-acetylglucosamine transferase of Corynebacterium glutamicum (strain ATCC 13032 / DSM 20300 / JCM 1318 / BCRC 11384 / CCUG 27702 / LMG 3730 / NBRC 12168 / NCIMB 10025 / NRRL B-2784 / 534).